The following is a 230-amino-acid chain: MPLHRTRIKLCGLTQPDDVDHAVALGADAIGLVFYPPSPRYVATGRAAELARRAGPFVTVTGLFVNASADDVARVLDQVPLTLLQFHGDETPEQCAEIAGKVGLPWLRALRVQPGTDLVEFADRFAAAQGLLLDAFVEGYGGGGHVFDWTLIPPQWLSQSAPPSAAPRLVLSGGLSAQNVAGAIERVRPYAVDVSSGIEAARGVKDRARMTAFVRAVREADAALGASVQA.

It belongs to the TrpF family.

It carries out the reaction N-(5-phospho-beta-D-ribosyl)anthranilate = 1-(2-carboxyphenylamino)-1-deoxy-D-ribulose 5-phosphate. It participates in amino-acid biosynthesis; L-tryptophan biosynthesis; L-tryptophan from chorismate: step 3/5. The sequence is that of N-(5'-phosphoribosyl)anthranilate isomerase from Ralstonia nicotianae (strain ATCC BAA-1114 / GMI1000) (Ralstonia solanacearum).